A 244-amino-acid polypeptide reads, in one-letter code: ATP synthase subunit a (244 aa).

6 consecutive transmembrane segments (helical) span residues 17–37 (LTNI…AILT), 75–95 (FLAL…LGLP), 112–132 (DPAI…YYGV), 164–184 (LTLG…LGLL), 196–216 (FFLG…WQAF), and 217–237 (SLFI…VYMS).

It belongs to the ATPase A chain family. In terms of assembly, F-type ATPases have 2 components, CF(1) - the catalytic core - and CF(0) - the membrane proton channel. CF(1) has five subunits: alpha(3), beta(3), gamma(1), delta(1), epsilon(1). CF(0) has three main subunits: a(1), b(2) and c(9-12). The alpha and beta chains form an alternating ring which encloses part of the gamma chain. CF(1) is attached to CF(0) by a central stalk formed by the gamma and epsilon chains, while a peripheral stalk is formed by the delta and b chains.

The protein localises to the cell membrane. In terms of biological role, key component of the proton channel; it plays a direct role in the translocation of protons across the membrane. This is ATP synthase subunit a from Bacillus velezensis (strain DSM 23117 / BGSC 10A6 / LMG 26770 / FZB42) (Bacillus amyloliquefaciens subsp. plantarum).